We begin with the raw amino-acid sequence, 215 residues long: Cytochrome c biogenesis ATP-binding export protein CcmA (215 aa).

Residues L3–R211 enclose the ABC transporter domain. G35–S42 lines the ATP pocket.

The protein belongs to the ABC transporter superfamily. CcmA exporter (TC 3.A.1.107) family. The complex is composed of two ATP-binding proteins (CcmA) and two transmembrane proteins (CcmB).

The protein localises to the cell inner membrane. It carries out the reaction heme b(in) + ATP + H2O = heme b(out) + ADP + phosphate + H(+). Part of the ABC transporter complex CcmAB involved in the biogenesis of c-type cytochromes; once thought to export heme, this seems not to be the case, but its exact role is uncertain. Responsible for energy coupling to the transport system. The sequence is that of Cytochrome c biogenesis ATP-binding export protein CcmA from Rhizobium etli (strain ATCC 51251 / DSM 11541 / JCM 21823 / NBRC 15573 / CFN 42).